A 662-amino-acid polypeptide reads, in one-letter code: Transketolase (662 aa).

Residue histidine 28 coordinates substrate. Thiamine diphosphate-binding positions include histidine 68 and 115–117; that span reads GPL. Aspartate 156 is a binding site for Mg(2+). Residues glycine 157 and asparagine 186 each coordinate thiamine diphosphate. Mg(2+)-binding residues include asparagine 186 and isoleucine 188. The substrate site is built by histidine 261, arginine 356, and serine 383. Histidine 261 contacts thiamine diphosphate. Glutamate 410 (proton donor) is an active-site residue. Phenylalanine 436 contributes to the thiamine diphosphate binding site. Substrate-binding residues include histidine 460, aspartate 468, and arginine 519.

Belongs to the transketolase family. Homodimer. It depends on Mg(2+) as a cofactor. Ca(2+) serves as cofactor. Mn(2+) is required as a cofactor. The cofactor is Co(2+). Requires thiamine diphosphate as cofactor.

It carries out the reaction D-sedoheptulose 7-phosphate + D-glyceraldehyde 3-phosphate = aldehydo-D-ribose 5-phosphate + D-xylulose 5-phosphate. It functions in the pathway carbohydrate biosynthesis; Calvin cycle. It participates in carbohydrate degradation; pentose phosphate pathway. Functionally, catalyzes the transfer of a two-carbon ketol group from a ketose donor to an aldose acceptor, via a covalent intermediate with the cofactor thiamine pyrophosphate. The chain is Transketolase (tkt) from Staphylococcus aureus (strain MRSA252).